We begin with the raw amino-acid sequence, 359 residues long: Glycerol-1-phosphate dehydrogenase [NAD(P)+] (359 aa).

NAD(+) contacts are provided by residues 107 to 111 (GRVID) and 129 to 132 (TAAS). Residue D134 participates in substrate binding. S138 contacts NAD(+). D181 contacts substrate. Residues D181 and H261 each coordinate Zn(2+). H265 is a binding site for substrate. H277 is a binding site for Zn(2+).

It belongs to the glycerol-1-phosphate dehydrogenase family. Zn(2+) is required as a cofactor.

It localises to the cytoplasm. The enzyme catalyses sn-glycerol 1-phosphate + NAD(+) = dihydroxyacetone phosphate + NADH + H(+). The catalysed reaction is sn-glycerol 1-phosphate + NADP(+) = dihydroxyacetone phosphate + NADPH + H(+). The protein operates within membrane lipid metabolism; glycerophospholipid metabolism. Catalyzes the NAD(P)H-dependent reduction of dihydroxyacetonephosphate (DHAP or glycerone phosphate) to glycerol 1-phosphate (G1P). The G1P thus generated is used as the glycerophosphate backbone of phospholipids in the cellular membranes of Archaea. The polypeptide is Glycerol-1-phosphate dehydrogenase [NAD(P)+] (Methanoregula boonei (strain DSM 21154 / JCM 14090 / 6A8)).